The primary structure comprises 92 residues: Small ribosomal subunit protein uS19 (92 aa).

Belongs to the universal ribosomal protein uS19 family.

In terms of biological role, protein S19 forms a complex with S13 that binds strongly to the 16S ribosomal RNA. The sequence is that of Small ribosomal subunit protein uS19 from Rickettsia felis (strain ATCC VR-1525 / URRWXCal2) (Rickettsia azadi).